Reading from the N-terminus, the 119-residue chain is Ethylene-responsive proteinase inhibitor 1 (119 aa).

An N-terminal signal peptide occupies residues 1–27; it reads MEANKSMVKLVAFLIILVSSCFQSLTA. The propeptide occupies 28-48; it reads QDLEIEVSDGLNVLQVHDVSQ.

It belongs to the protease inhibitor I13 (potato type I serine protease inhibitor) family.

It localises to the secreted. This chain is Ethylene-responsive proteinase inhibitor 1, found in Solanum lycopersicum (Tomato).